A 176-amino-acid polypeptide reads, in one-letter code: MLSVMVSSSLVLIVFFLGASEEAKPATTTTIKNTKPQCRPEDYATRLQDLRVTFHRVKPTLQREDDYSVWLDGTVVKGCWGCSVMDWLLRRYLEIVFPAGDHVYPGLKTELHSMRSTLESIYKDMRQCPLLGCGDKSVISRLSQEAERKSDNGTRKGLSELDTLFSRLEEYLHSRK.

A signal peptide spans 1-25 (MLSVMVSSSLVLIVFFLGASEEAKP). Intrachain disulfides connect Cys38–Cys128 and Cys82–Cys133. Asn152 is a glycosylation site (N-linked (GlcNAc...) asparagine; by host).

It belongs to the IL-10 family. In terms of assembly, homodimer; disulfide-linked.

It localises to the secreted. Functional viral IL-10 homolog. Can bind to the human IL-10 receptor and compete with human IL-10 for binding sites. Requires both subunits of the human IL-10 receptor complex to induce signal transduction events and biological activities. IL-10 signaling pathway has several immunosuppressive activities that are exploited by the virus. Inhibits TLR-induced type I interferon production in host plasmacytoid dendritic cells. The protein is Viral interleukin-10 homolog (UL111A) of Homo sapiens (Human).